We begin with the raw amino-acid sequence, 175 residues long: ATP synthase subunit delta (175 aa).

The protein belongs to the ATPase delta chain family. In terms of assembly, F-type ATPases have 2 components, F(1) - the catalytic core - and F(0) - the membrane proton channel. F(1) has five subunits: alpha(3), beta(3), gamma(1), delta(1), epsilon(1). F(0) has three main subunits: a(1), b(2) and c(10-14). The alpha and beta chains form an alternating ring which encloses part of the gamma chain. F(1) is attached to F(0) by a central stalk formed by the gamma and epsilon chains, while a peripheral stalk is formed by the delta and b chains.

It is found in the cell membrane. In terms of biological role, f(1)F(0) ATP synthase produces ATP from ADP in the presence of a proton or sodium gradient. F-type ATPases consist of two structural domains, F(1) containing the extramembraneous catalytic core and F(0) containing the membrane proton channel, linked together by a central stalk and a peripheral stalk. During catalysis, ATP synthesis in the catalytic domain of F(1) is coupled via a rotary mechanism of the central stalk subunits to proton translocation. This protein is part of the stalk that links CF(0) to CF(1). It either transmits conformational changes from CF(0) to CF(1) or is implicated in proton conduction. This chain is ATP synthase subunit delta, found in Brevibacillus brevis (strain 47 / JCM 6285 / NBRC 100599).